We begin with the raw amino-acid sequence, 273 residues long: Ethanolamine ammonia-lyase small subunit (273 aa).

3 residues coordinate adenosylcob(III)alamin: Val164, Glu185, and Cys214.

The protein belongs to the EutC family. As to quaternary structure, the basic unit is a heterodimer which dimerizes to form tetramers. The heterotetramers trimerize; 6 large subunits form a core ring with 6 small subunits projecting outwards. Requires adenosylcob(III)alamin as cofactor.

It localises to the bacterial microcompartment. It carries out the reaction ethanolamine = acetaldehyde + NH4(+). Its pathway is amine and polyamine degradation; ethanolamine degradation. Catalyzes the deamination of various vicinal amino-alcohols to oxo compounds. Allows this organism to utilize ethanolamine as the sole source of nitrogen and carbon in the presence of external vitamin B12. This Pseudomonas aeruginosa (strain LESB58) protein is Ethanolamine ammonia-lyase small subunit.